A 961-amino-acid polypeptide reads, in one-letter code: MEQDYKPHEIEEKWQKKWNESLIFQADPDKREKFFITIPYPYLNGNLHAGHTRTFTIGDVVARHKRMLGYNVLYPMGFHVTGTPIVGLAELIASRDPQTMDVYEHLHGIPGDILPTLDTPEKIVDYFKREAEKAMRMIGYSIDWRRKFTTTDPTYKKFIEWQYIRLEEKGLIVKGSHPVKWCPNDNNPVEDHDILYGEEATIVEYTLIKFRYNDLVLPCATLRPETTFGVTNLWVNPDVDYVKARVEKDGNEEFWVVSKEAFRKLTFTDRTVEYVEDVPAKSIIGIKLTNPITGDEVISLPASFVKPENGSGIVMSVPAHAPFDYLALRDLYDADLSEYGITEDLRDIKLISLIQVPEFGEFPAKEIVESMGIANQKAPKAEEATKIVYRREFHGGVLKEITGKYRGYPVSKIKDVLTRDLIASNAGETFYEFSEPVVCRCGTPCVVNMVKGQWFLNYSNPEWKAKVYKCLSQMRIIPEEYRVEFENKVDWLKDKACARRKGLGTRLPFDKEWLIESLGDSTIYMSYYIIARFLERGDLALEQLTLSFFDYVLLGIGDSAAVSAETGLKQELVEEIRSHFNYWYPVDLRSSGKDLVPNHLLFFLFHHVALFEEEKWPRALAVNGFVSLEGQKMSKSKGPILTLESAVSAYGADITRMYILSTAEQTQDADWQKTGIDSARRQVDRFYSFAKDVIESGKRATLSTELKLIDRWMLSRMQKYIMETNIALDSIQTREAIQNSFFLLINDVRWYQRRGGEALLYYVLDNWVRLMAPFTPHLCEEIWEAMGHEDPISLAQYPLDNEDLIDEGAELAEEAVKSTLNDIEEIVRVTKMTPQKVYLYTAPAWKAEAIRCACELQIEAPLEVGALIKTLMANPELKRFGKEIPKFVQKIIPEFKSGGAERYETFAYLGLDEQALLKESASFLEKEIGCPVEIYSADSPEYDPQKKSRFAEPLRPAIYIE.

Residues 41-51 carry the 'HIGH' region motif; that stretch reads PYLNGNLHAGH. Positions 632-636 match the 'KMSKS' region motif; the sequence is KMSKS. Lysine 635 contributes to the ATP binding site.

It belongs to the class-I aminoacyl-tRNA synthetase family.

It localises to the cytoplasm. It catalyses the reaction tRNA(Leu) + L-leucine + ATP = L-leucyl-tRNA(Leu) + AMP + diphosphate. This Methanosarcina acetivorans (strain ATCC 35395 / DSM 2834 / JCM 12185 / C2A) protein is Leucine--tRNA ligase.